A 456-amino-acid polypeptide reads, in one-letter code: Bacteriochlorophyllide d C-12(1)-methyltransferase (456 aa).

Positions 178-405 constitute a Radical SAM core domain; the sequence is HAKKYSQLIP…MFEPKKLGGE (228 aa). [4Fe-4S] cluster is bound by residues Cys194, Cys198, and Cys201.

Belongs to the radical SAM superfamily. [4Fe-4S] cluster is required as a cofactor.

Its subcellular location is the cytoplasm. It carries out the reaction 8-ethyl-12-methyl-3-vinylbacteriochlorophyllide d + S-adenosyl-L-methionine = 8,12-diethyl-3-vinylbacteriochlorophyllide d + S-adenosyl-L-homocysteine + H(+). Its pathway is porphyrin-containing compound metabolism; bacteriochlorophyll biosynthesis (light-independent). In terms of biological role, involved in the biosynthesis of the major light-harvesting pigment bacteriochlorophyll c (BChlc), which confers a significant competitive advantage to green sulfur bacteria living at limiting red and near-infrared light intensities. BchR is a methyltransferase that adds a single methyl group to the methyl carbon at the C-12(1) position of 8-ethyl-12-methyl-3-vinylbacteriochlorophyllide d to yield 8,12-diethyl-3-vinylbacteriochlorophyllide d. This Chlorobaculum tepidum (strain ATCC 49652 / DSM 12025 / NBRC 103806 / TLS) (Chlorobium tepidum) protein is Bacteriochlorophyllide d C-12(1)-methyltransferase.